A 535-amino-acid chain; its full sequence is CTP synthase (535 aa).

Residues 1-266 (MKTKFIFITG…DEQVVEKLNI (266 aa)) form an amidoligase domain region. Serine 14 serves as a coordination point for CTP. Serine 14 lines the UTP pocket. ATP is bound by residues 15–20 (SIGKGL) and aspartate 72. Residues aspartate 72 and glutamate 140 each contribute to the Mg(2+) site. CTP-binding positions include 147 to 149 (DIE), 187 to 192 (KTKPTQ), and lysine 223. Residues 187–192 (KTKPTQ) and lysine 223 each bind UTP. One can recognise a Glutamine amidotransferase type-1 domain in the interval 292–534 (RIAIVGKYVN…IGASLTHRNQ (243 aa)). Glycine 354 is an L-glutamine binding site. Cysteine 381 functions as the Nucleophile; for glutamine hydrolysis in the catalytic mechanism. Residues 382–385 (LGMQ), glutamate 405, and arginine 462 contribute to the L-glutamine site. Active-site residues include histidine 507 and glutamate 509.

It belongs to the CTP synthase family. Homotetramer.

It carries out the reaction UTP + L-glutamine + ATP + H2O = CTP + L-glutamate + ADP + phosphate + 2 H(+). The enzyme catalyses L-glutamine + H2O = L-glutamate + NH4(+). It catalyses the reaction UTP + NH4(+) + ATP = CTP + ADP + phosphate + 2 H(+). The protein operates within pyrimidine metabolism; CTP biosynthesis via de novo pathway; CTP from UDP: step 2/2. Allosterically activated by GTP, when glutamine is the substrate; GTP has no effect on the reaction when ammonia is the substrate. The allosteric effector GTP functions by stabilizing the protein conformation that binds the tetrahedral intermediate(s) formed during glutamine hydrolysis. Inhibited by the product CTP, via allosteric rather than competitive inhibition. Functionally, catalyzes the ATP-dependent amination of UTP to CTP with either L-glutamine or ammonia as the source of nitrogen. Regulates intracellular CTP levels through interactions with the four ribonucleotide triphosphates. This chain is CTP synthase, found in Trichlorobacter lovleyi (strain ATCC BAA-1151 / DSM 17278 / SZ) (Geobacter lovleyi).